Reading from the N-terminus, the 215-residue chain is Intraflagellar transport protein 43 homolog B (215 aa).

Residues 1-107 (MDDHLKLGDS…SDGEGDIPVI (107 aa)) form a disordered region.

It belongs to the IFT43 family. As to quaternary structure, component of IFT complex A.

Component of IFT complex A (IFT-A) involved in retrograde ciliary transport along microtubules from the ciliary tip to the base. The sequence is that of Intraflagellar transport protein 43 homolog B (ift43b) from Salmo salar (Atlantic salmon).